Here is a 105-residue protein sequence, read N- to C-terminus: Diuretic hormone class 2 (105 aa).

The first 23 residues, 1 to 23 (MTVLCTLMAFVMVVAISSLTVDA), serve as a signal peptide directing secretion. A propeptide spanning residues 24–63 (IPHSHESYWDQQDDIDRDEFLELLSRLSRTVMNRPEMENS) is cleaved from the precursor. Position 96 is a proline amide (Pro-96). Residues 101 to 105 (RSEQA) constitute a propeptide that is removed on maturation.

As to expression, expressed in central brain, antennal lobes, retrocerebral complex and gnathal, thoracic and abdominal ganglia but not in optical lobes (at protein level).

The protein localises to the secreted. Regulation of fluid secretion. Stimulates Malpighian tubules fluid secretion. The chain is Diuretic hormone class 2 from Camponotus floridanus (Florida carpenter ant).